A 476-amino-acid chain; its full sequence is Glutamyl-tRNA(Gln) amidotransferase subunit A (476 aa).

Active-site charge relay system residues include lysine 76 and serine 151. Serine 175 serves as the catalytic Acyl-ester intermediate.

Belongs to the amidase family. GatA subfamily. As to quaternary structure, heterotrimer of A, B and C subunits.

It carries out the reaction L-glutamyl-tRNA(Gln) + L-glutamine + ATP + H2O = L-glutaminyl-tRNA(Gln) + L-glutamate + ADP + phosphate + H(+). Allows the formation of correctly charged Gln-tRNA(Gln) through the transamidation of misacylated Glu-tRNA(Gln) in organisms which lack glutaminyl-tRNA synthetase. The reaction takes place in the presence of glutamine and ATP through an activated gamma-phospho-Glu-tRNA(Gln). The sequence is that of Glutamyl-tRNA(Gln) amidotransferase subunit A from Chlorobium phaeobacteroides (strain DSM 266 / SMG 266 / 2430).